The sequence spans 1035 residues: MAAETLNFGPEWLRALSGGGSVASPPPSPAMPKYKLADYRYGREEMLALYVKENKVPEELQDKEFAAVLQDEPLQPLALEPLTEEEQRNFSLSVNSVAVLRLMGKGAGPPLAGTSRGRGSTRSRGRGRGDSCFYQRSIEEGDGAFGRSPREIQRSQSWDDRGERRFEKSARRDGARCGFEEGGAGPRKEHARSDSENWRSLREEQEEEEEGSWRLGAGPRRDGDRWRSASPDGGPRSAGWREHGERRRKFEFDLRGDRGGCGEEEGRGGGGSSHLRRCRAPEGFEEDKDGLPEWCLDDEDEEMGTFDASGAFLPLKKGPKEPIPEEQELDFQGLEEEEEPSEGLEEEGPEAGGKELTPLPPQEEKSSSPSPLPTLGPLWGTNGDGDETAEKEPPAAEDDIRGIQLSPGVGSSAGPPGDLEDDEGLKHLQQEAEKLVASLQDSSLEEEQFTAAMQTQGLRHSAAATALPLSHGAARKWFYKDPQGEIQGPFTTQEMAEWFQAGYFSMSLLVKRGCDEGFQPLGEVIKMWGRVPFAPGPSPPPLLGNMDQERLKKQQELAAAALYQQLQHQQFLQLVSSRQLPQCALREKAALGDLTPPPPPPPQQQQQQLTAFLQQLQALKPPRGGDQNLLPTMSRSLSVPDSGRLWDVHTSASSQSGGEASLWDIPINSSTQGPILEQLQLQHKFQERREVELRAKREEEERKRREEKRRQQQQEEQKRRQEEEELFRRKHVRQQELLLKLLQQQQAVPVPPAPSSPPPLWAGLAKQGLSMKTLLELQLEGERQLHKQPPPREPARAQAPNHRVQLGGLGTAPLNQWVSEAGPLWGGPDKSGGGSSGLGLWEDTPKSGGSLVRGLGLKNSRSSPSLSDSYSHLSGRPIRKKTEEEEKLLKLLQGIPRPQDGFTQWCEQMLHTLSATGSLDVPMAVAILKEVESPYDVHDYIRSCLGDTLEAKEFAKQFLERRAKQKASQQRQQQQEAWLSSASLQTAFQANHSTKLGPGEGSKAKRRALMLHSDPSILGYSLHGSSGEIESVDDY.

Residues S24, S28, S137, and S157 each carry the phosphoserine modification. The segment at 105–422 is disordered; the sequence is KGAGPPLAGT…AGPPGDLEDD (318 aa). 2 stretches are compositionally biased toward basic and acidic residues: residues 148 to 179 and 186 to 203; these read SPRE…RCGF and PRKE…SLRE. At S230 the chain carries Phosphoserine. The segment covering 239–267 has biased composition (basic and acidic residues); sequence GWREHGERRRKFEFDLRGDRGGCGEEEGR. Composition is skewed to acidic residues over residues 295–304 and 324–349; these read CLDDEDEEMG and PEEQ…EEGP. Residue S341 is modified to Phosphoserine. A compositionally biased stretch (low complexity) spans 367–378; that stretch reads SSPSPLPTLGPL. A compositionally biased stretch (basic and acidic residues) spans 388–401; it reads TAEKEPPAAEDDIR. At S406 the chain carries Phosphoserine. A compositionally biased stretch (low complexity) spans 406–417; sequence SPGVGSSAGPPG. Residues 474 to 522 enclose the GYF domain; the sequence is ARKWFYKDPQGEIQGPFTTQEMAEWFQAGYFSMSLLVKRGCDEGFQPLG. Phosphoserine is present on residues S538 and S638. Disordered regions lie at residues 621–640, 696–724, and 825–879; these read PPRG…LSVP, KREE…QEEE, and WGGP…RPIR. The segment covering 629–639 has biased composition (polar residues); the sequence is LLPTMSRSLSV. The span at 696–722 shows a compositional bias: basic and acidic residues; it reads KREEEERKRREEKRRQQQQEEQKRRQE. Residues 857-874 are compositionally biased toward low complexity; it reads LKNSRSSPSLSDSYSHLS. S862 carries the phosphoserine modification.

The protein belongs to the GIGYF family. As to quaternary structure, interacts with GRB10. This transient binding is increased under IGF1 stimulation and leads to recruitment of GIGYF1/GRB10 complex to IGF1 receptor. Interacts with DDX6.

Functionally, may act cooperatively with GRB10 to regulate tyrosine kinase receptor signaling. May increase IGF1 receptor phosphorylation under IGF1 stimulation as well as phosphorylation of IRS1 and SHC1. The sequence is that of GRB10-interacting GYF protein 1 (GIGYF1) from Homo sapiens (Human).